We begin with the raw amino-acid sequence, 256 residues long: Imidazole glycerol phosphate synthase subunit HisF (256 aa).

Catalysis depends on residues aspartate 11 and aspartate 130.

The protein belongs to the HisA/HisF family. As to quaternary structure, heterodimer of HisH and HisF.

The protein resides in the cytoplasm. It carries out the reaction 5-[(5-phospho-1-deoxy-D-ribulos-1-ylimino)methylamino]-1-(5-phospho-beta-D-ribosyl)imidazole-4-carboxamide + L-glutamine = D-erythro-1-(imidazol-4-yl)glycerol 3-phosphate + 5-amino-1-(5-phospho-beta-D-ribosyl)imidazole-4-carboxamide + L-glutamate + H(+). It functions in the pathway amino-acid biosynthesis; L-histidine biosynthesis; L-histidine from 5-phospho-alpha-D-ribose 1-diphosphate: step 5/9. IGPS catalyzes the conversion of PRFAR and glutamine to IGP, AICAR and glutamate. The HisF subunit catalyzes the cyclization activity that produces IGP and AICAR from PRFAR using the ammonia provided by the HisH subunit. The protein is Imidazole glycerol phosphate synthase subunit HisF of Prochlorococcus marinus (strain MIT 9301).